A 358-amino-acid polypeptide reads, in one-letter code: Dual-specificity RNA methyltransferase RlmN (358 aa).

Residue E91 is the Proton acceptor of the active site. The Radical SAM core domain maps to 102 to 337; it reads GNIRITQCLS…TILRKSKGQD (236 aa). C109 and C342 are disulfide-bonded. Positions 116, 120, and 123 each coordinate [4Fe-4S] cluster. S-adenosyl-L-methionine contacts are provided by residues 169–170, S201, 223–225, and N299; these read GE and SLH. C342 serves as the catalytic S-methylcysteine intermediate.

The protein belongs to the radical SAM superfamily. RlmN family. [4Fe-4S] cluster is required as a cofactor.

It is found in the cytoplasm. It carries out the reaction adenosine(2503) in 23S rRNA + 2 reduced [2Fe-2S]-[ferredoxin] + 2 S-adenosyl-L-methionine = 2-methyladenosine(2503) in 23S rRNA + 5'-deoxyadenosine + L-methionine + 2 oxidized [2Fe-2S]-[ferredoxin] + S-adenosyl-L-homocysteine. The enzyme catalyses adenosine(37) in tRNA + 2 reduced [2Fe-2S]-[ferredoxin] + 2 S-adenosyl-L-methionine = 2-methyladenosine(37) in tRNA + 5'-deoxyadenosine + L-methionine + 2 oxidized [2Fe-2S]-[ferredoxin] + S-adenosyl-L-homocysteine. Specifically methylates position 2 of adenine 2503 in 23S rRNA and position 2 of adenine 37 in tRNAs. m2A2503 modification seems to play a crucial role in the proofreading step occurring at the peptidyl transferase center and thus would serve to optimize ribosomal fidelity. This is Dual-specificity RNA methyltransferase RlmN from Lawsonia intracellularis (strain PHE/MN1-00).